The chain runs to 390 residues: S-adenosylmethionine synthase 3 (390 aa).

Glutamate 9 is a binding site for Mg(2+). An ATP-binding site is contributed by histidine 15. Glutamate 43 contributes to the K(+) binding site. 2 residues coordinate L-methionine: glutamate 56 and glutamine 99. ATP contacts are provided by residues 167–169 (DGK), 235–238 (SGRF), aspartate 246, 252–253 (RK), alanine 269, lysine 273, and lysine 277. Aspartate 246 provides a ligand contact to L-methionine. Lysine 277 serves as a coordination point for L-methionine.

Belongs to the AdoMet synthase family. Homotetramer. The cofactor is Mn(2+). Mg(2+) serves as cofactor. Requires Co(2+) as cofactor. K(+) is required as a cofactor. As to expression, mostly expressed in stems and leaves.

The protein resides in the cytoplasm. It carries out the reaction L-methionine + ATP + H2O = S-adenosyl-L-methionine + phosphate + diphosphate. It participates in amino-acid biosynthesis; S-adenosyl-L-methionine biosynthesis; S-adenosyl-L-methionine from L-methionine: step 1/1. Catalyzes the formation of S-adenosylmethionine from methionine and ATP. The reaction comprises two steps that are both catalyzed by the same enzyme: formation of S-adenosylmethionine (AdoMet) and triphosphate, and subsequent hydrolysis of the triphosphate. The polypeptide is S-adenosylmethionine synthase 3 (SAM3) (Solanum lycopersicum (Tomato)).